The following is a 211-amino-acid chain: Cytochrome c biogenesis ATP-binding export protein CcmA 2 (211 aa).

The 203-residue stretch at 6 to 208 (LEARELGVRR…GAVLDLATDA (203 aa)) folds into the ABC transporter domain. Position 38–45 (38–45 (GPNGAGKT)) interacts with ATP.

The protein belongs to the ABC transporter superfamily. CcmA exporter (TC 3.A.1.107) family. As to quaternary structure, the complex is composed of two ATP-binding proteins (CcmA) and two transmembrane proteins (CcmB).

The protein resides in the cell inner membrane. The enzyme catalyses heme b(in) + ATP + H2O = heme b(out) + ADP + phosphate + H(+). Part of the ABC transporter complex CcmAB involved in the biogenesis of c-type cytochromes; once thought to export heme, this seems not to be the case, but its exact role is uncertain. Responsible for energy coupling to the transport system. This chain is Cytochrome c biogenesis ATP-binding export protein CcmA 2, found in Cupriavidus metallidurans (strain ATCC 43123 / DSM 2839 / NBRC 102507 / CH34) (Ralstonia metallidurans).